The following is a 314-amino-acid chain: Ribose-phosphate pyrophosphokinase (314 aa).

ATP contacts are provided by residues 37–39 (DGE) and 96–97 (RQ). Mg(2+) is bound by residues His-131 and Asp-170. Lys-194 is an active-site residue. D-ribose 5-phosphate-binding positions include Arg-196, Asp-220, and 224–228 (DTGGT).

This sequence belongs to the ribose-phosphate pyrophosphokinase family. Class I subfamily. In terms of assembly, homohexamer. Mg(2+) is required as a cofactor.

It is found in the cytoplasm. It catalyses the reaction D-ribose 5-phosphate + ATP = 5-phospho-alpha-D-ribose 1-diphosphate + AMP + H(+). It participates in metabolic intermediate biosynthesis; 5-phospho-alpha-D-ribose 1-diphosphate biosynthesis; 5-phospho-alpha-D-ribose 1-diphosphate from D-ribose 5-phosphate (route I): step 1/1. In terms of biological role, involved in the biosynthesis of the central metabolite phospho-alpha-D-ribosyl-1-pyrophosphate (PRPP) via the transfer of pyrophosphoryl group from ATP to 1-hydroxyl of ribose-5-phosphate (Rib-5-P). The chain is Ribose-phosphate pyrophosphokinase from Vibrio cholerae serotype O1 (strain ATCC 39315 / El Tor Inaba N16961).